A 148-amino-acid chain; its full sequence is Cytochrome c oxidase subunit 6, mitochondrial (148 aa).

A mitochondrion-targeting transit peptide spans 1 to 40 (MLSRAIFRNPVINRTLLRARPGAYHATRLTKNTFIQSRKY).

This sequence belongs to the cytochrome c oxidase subunit 5A family. As to quaternary structure, component of the cytochrome c oxidase (complex IV, CIV), a multisubunit enzyme composed of 12 subunits. The complex is composed of a catalytic core of 3 subunits COX1, COX2 and COX3, encoded in the mitochondrial DNA, and 9 supernumerary subunits COX4, COX5A (or COX5B), COX6, COX7, COX8, COX9, COX12, COX13 and COX26, which are encoded in the nuclear genome. The complex exists as a monomer or a dimer and forms supercomplexes (SCs) in the inner mitochondrial membrane with a dimer of ubiquinol-cytochrome c oxidoreductase (cytochrome b-c1 complex, complex III, CIII), resulting in 2 different assemblies (supercomplexes III(2)IV and III(2)IV(2)). COX26 interacts with COX1, COX2, COX6 and COX9.

Its subcellular location is the mitochondrion inner membrane. It participates in energy metabolism; oxidative phosphorylation. In terms of biological role, component of the cytochrome c oxidase, the last enzyme in the mitochondrial electron transport chain which drives oxidative phosphorylation. The respiratory chain contains 3 multisubunit complexes succinate dehydrogenase (complex II, CII), ubiquinol-cytochrome c oxidoreductase (cytochrome b-c1 complex, complex III, CIII) and cytochrome c oxidase (complex IV, CIV), that cooperate to transfer electrons derived from NADH and succinate to molecular oxygen, creating an electrochemical gradient over the inner membrane that drives transmembrane transport and the ATP synthase. Cytochrome c oxidase is the component of the respiratory chain that catalyzes the reduction of oxygen to water. Electrons originating from reduced cytochrome c in the intermembrane space (IMS) are transferred via the dinuclear copper A center (CU(A)) of COX2 and heme A of COX1 to the active site in COX1, a binuclear center (BNC) formed by heme A3 and copper B (CU(B)). The BNC reduces molecular oxygen to 2 water molecules using 4 electrons from cytochrome c in the IMS and 4 protons from the mitochondrial matrix. COX6 may stabilize the region of CIV at the interface with CIII, supporting a role in formation or stability of the CIII(2)IV(2) SC. This is Cytochrome c oxidase subunit 6, mitochondrial (COX6) from Saccharomyces cerevisiae (strain ATCC 204508 / S288c) (Baker's yeast).